Here is a 454-residue protein sequence, read N- to C-terminus: Allantoinase (454 aa).

Positions 58, 60, 149, 189, 245, and 318 each coordinate Zn(2+). At K149 the chain carries N6-carboxylysine.

This sequence belongs to the metallo-dependent hydrolases superfamily. Allantoinase family. Homotetramer. It depends on Zn(2+) as a cofactor. Post-translationally, carboxylation allows a single lysine to coordinate two zinc ions.

The catalysed reaction is (S)-allantoin + H2O = allantoate + H(+). The protein operates within nitrogen metabolism; (S)-allantoin degradation; allantoate from (S)-allantoin: step 1/1. Functionally, catalyzes the conversion of allantoin (5-ureidohydantoin) to allantoic acid by hydrolytic cleavage of the five-member hydantoin ring. This is Allantoinase from Enterococcus faecalis (strain ATCC 700802 / V583).